The primary structure comprises 335 residues: tRNA N6-adenosine threonylcarbamoyltransferase (335 aa).

H109, H113, and Y130 together coordinate a divalent metal cation. Substrate is bound by residues 130-134 (YVSGG), D162, G177, E181, and N266. Residue D294 coordinates a divalent metal cation.

This sequence belongs to the KAE1 / TsaD family. Component of the EKC/KEOPS complex composed of at least GON7, TP53RK, TPRKB, OSGEP and LAGE3; the whole complex dimerizes. A divalent metal cation serves as cofactor.

The protein resides in the cytoplasm. It is found in the nucleus. The enzyme catalyses L-threonylcarbamoyladenylate + adenosine(37) in tRNA = N(6)-L-threonylcarbamoyladenosine(37) in tRNA + AMP + H(+). Component of the EKC/KEOPS complex that is required for the formation of a threonylcarbamoyl group on adenosine at position 37 (t(6)A37) in tRNAs that read codons beginning with adenine. The complex is probably involved in the transfer of the threonylcarbamoyl moiety of threonylcarbamoyl-AMP (TC-AMP) to the N6 group of A37. OSGEP likely plays a direct catalytic role in this reaction, but requires other protein(s) of the complex to fulfill this activity. The sequence is that of tRNA N6-adenosine threonylcarbamoyltransferase from Bos taurus (Bovine).